Reading from the N-terminus, the 358-residue chain is MTTPDAAIDSKISDSNGADKNKSAADDNAFNAPGRKRHHNNQPRRDKRDVHGWVALDKPVGMTSTQAVAVVKRLFSAKRAGHAGTLDPLASGGLPIALGEATKTVPFVMDGRKRYRFTVAWGEERDTDDTEGRAVATSAERPTAEAIMALLPSFTGKIEQIPPQYSAVKIQGERAYDLARDGEVVPLAPRPVEIHHLNLADHQDSGHSVFEAECGKGTYVRALARDMGRLLGCYGHICALRRTLVGPFDETSMIPLEHLQALCDRAASGEGNLADALLPVETALDDIPALAVTRADAARLHRGQAVLLRGRDAPNMSGTVYVTVAGRLLALAELGNGELIPKRVFNLSGLTASPHRQG.

Positions methionine 1 to valine 50 are disordered. Catalysis depends on aspartate 87, which acts as the Nucleophile.

Belongs to the pseudouridine synthase TruB family. Type 1 subfamily.

The catalysed reaction is uridine(55) in tRNA = pseudouridine(55) in tRNA. Its function is as follows. Responsible for synthesis of pseudouridine from uracil-55 in the psi GC loop of transfer RNAs. This is tRNA pseudouridine synthase B from Nitrobacter winogradskyi (strain ATCC 25391 / DSM 10237 / CIP 104748 / NCIMB 11846 / Nb-255).